A 458-amino-acid chain; its full sequence is Phosphoglucosamine mutase (458 aa).

The active-site Phosphoserine intermediate is Ser108. Ser108, Asp247, Asp249, and Asp251 together coordinate Mg(2+). Ser108 is modified (phosphoserine).

Belongs to the phosphohexose mutase family. Mg(2+) is required as a cofactor. Post-translationally, activated by phosphorylation.

It catalyses the reaction alpha-D-glucosamine 1-phosphate = D-glucosamine 6-phosphate. Catalyzes the conversion of glucosamine-6-phosphate to glucosamine-1-phosphate. This is Phosphoglucosamine mutase from Nitrosomonas europaea (strain ATCC 19718 / CIP 103999 / KCTC 2705 / NBRC 14298).